We begin with the raw amino-acid sequence, 196 residues long: Fucoxanthin-chlorophyll a-c binding protein A, chloroplastic (196 aa).

Residues 1-31 (MKFAVFASLLASRAAFAPAQQSARTSVATNM) constitute a chloroplast transit peptide. A run of 3 helical transmembrane segments spans residues 73–94 (ICML…PGDI), 114–134 (VPGA…IAVM), and 174–196 (GRAA…SILP).

The protein belongs to the fucoxanthin chlorophyll protein family. In terms of assembly, the LHC complex of chromophytic algae is composed of fucoxanthin, chlorophyll A and C bound non-covalently by fucoxanthin chlorophyll proteins (FCPs). The ratio of the pigments in LHC; fucoxanthin: chlorophyll C: chlorophyll A; (0.6-1): (0.1-0.3): (1).

Its subcellular location is the plastid. The protein resides in the chloroplast thylakoid membrane. In terms of biological role, the light-harvesting complex (LHC) functions as a light receptor, it captures and delivers excitation energy to photosystems with which it is closely associated. Energy is transferred from the carotenoid and chlorophyll C (or B) to chlorophyll A and the photosynthetic reaction centers where it is used to synthesize ATP and reducing power. In Phaeodactylum tricornutum (Diatom), this protein is Fucoxanthin-chlorophyll a-c binding protein A, chloroplastic (FCPA).